Here is a 654-residue protein sequence, read N- to C-terminus: Pyoverdine export ATP-binding/permease protein PvdT (654 aa).

The 240-residue stretch at 6–245 (IELCDIRKAY…QPEQLQANDL (240 aa)) folds into the ABC transporter domain. ATP is bound at residue 43 to 50 (GASGSGKS). Transmembrane regions (helical) follow at residues 282–302 (ALTL…LAVG), 529–549 (LSLM…IGVM), 596–616 (IVIA…VAFA), and 617–637 (LPAI…FGFM).

Belongs to the ABC transporter superfamily. Macrolide exporter (TC 3.A.1.122) family. In terms of assembly, part of the tripartite efflux system PvdRT-OpmQ, which is composed of an inner membrane component with both ATPase and permease domains, PvdT, a periplasmic membrane fusion protein, PvdR, and an outer membrane component, OpmQ.

It is found in the cell inner membrane. Its function is as follows. Part of the tripartite efflux system PvdRT-OpmQ required for the secretion into the extracellular milieu of the siderophore pyoverdine (PVD), which is involved in iron acquisition. This subunit binds PVD and drives its secretion by hydrolyzing ATP. The system is responsible for export of newly synthesized PVD after the final steps of biosynthesis have taken place in the periplasm. It is also responsible for recycling of PVD after internalization of ferri-PVD into the periplasm by the outer-membrane receptor FpvA and release of iron from PVD, thus making PVD available for new cycles of iron uptake. This Pseudomonas entomophila (strain L48) protein is Pyoverdine export ATP-binding/permease protein PvdT.